The following is a 152-amino-acid chain: uncharacterized protein (152 aa).

Residues 12–34 (ALLYLGGGLLAMIYGLITFFMAF) traverse the membrane as a helical segment.

To B.subtilis YfjD.

The protein localises to the membrane. This is an uncharacterized protein from Bacillus subtilis (strain 168).